We begin with the raw amino-acid sequence, 48 residues long: ATP synthase protein 8 (48 aa).

Residue Met-1 is modified to N-formylmethionine. The Mitochondrial intermembrane segment spans residues 1–12 (MPQLIPFFFLNQ). A helical membrane pass occupies residues 13 to 33 (LFYGYLALFALLVLVSWVILP). Topologically, residues 34 to 48 (YLLQLQIVRLLITKL) are mitochondrial matrix.

As to quaternary structure, F-type ATP synthases have 2 components, the catalytic core F(1) and the membrane-embedded component F(0), linked together by a central stalk and a peripheral stalk. The central stalk, also called rotor shaft, is often seen as part of F(1). The peripheral stalk is seen as part of F(0). F(0) contains the membrane channel next to the rotor. F-type ATP synthases form dimers but each monomer functions independently in ATP generation. The dimer consists of 18 different polypeptides: ATP1 (subunit alpha, part of F(1), 3 molecules per monomer), ATP2 (subunit beta, part of F(1), 3 molecules per monomer), ATP3 (subunit gamma, part of the central stalk), ATP4 (subunit b, part of the peripheral stalk), ATP5/OSCP (subunit 5/OSCP, part of the peripheral stalk), ATP6 (subunit a, part of the peripheral stalk), ATP7 (subunit d, part of the peripheral stalk), ATP8 (subunit 8, part of the peripheral stalk), OLI1 (subunit c, part of the rotor, 10 molecules per monomer), ATP14 (subunit h, part of the peripheral stalk), ATP15 (subunit epsilon, part of the central stalk), ATP16 (subunit delta, part of the central stalk), ATP17 (subunit f, part of the peripheral stalk), ATP18 (subunit i/j, part of the peripheral stalk). Dimer-specific subunits are ATP19 (subunit k, at interface between monomers), ATP20 (subunit g, at interface between monomers), TIM11 (subunit e, at interface between monomers). Also contains subunit L.

Its subcellular location is the mitochondrion inner membrane. Functionally, mitochondrial membrane ATP synthase (F(1)F(0) ATP synthase or Complex V) produces ATP from ADP in the presence of a proton gradient across the membrane which is generated by electron transport complexes of the respiratory chain. F-type ATP synthases consist of two structural domains, F(1) - containing the extramembraneous catalytic core, and F(0) - containing the membrane proton channel, linked together by a central stalk and a peripheral stalk. During catalysis, ATP synthesis in the catalytic domain of F(1) is coupled via a rotary mechanism of the central stalk subunits to proton translocation. Part of the complex F(0) domain. Minor subunit located with subunit a/ATP6 in the membrane. In Pichia angusta (Yeast), this protein is ATP synthase protein 8.